A 241-amino-acid polypeptide reads, in one-letter code: 1-(5-phosphoribosyl)-5-[(5-phosphoribosylamino)methylideneamino] imidazole-4-carboxamide isomerase (241 aa).

Asp10 acts as the Proton acceptor in catalysis. Asp131 acts as the Proton donor in catalysis.

This sequence belongs to the HisA/HisF family.

The protein localises to the cytoplasm. It catalyses the reaction 1-(5-phospho-beta-D-ribosyl)-5-[(5-phospho-beta-D-ribosylamino)methylideneamino]imidazole-4-carboxamide = 5-[(5-phospho-1-deoxy-D-ribulos-1-ylimino)methylamino]-1-(5-phospho-beta-D-ribosyl)imidazole-4-carboxamide. Its pathway is amino-acid biosynthesis; L-histidine biosynthesis; L-histidine from 5-phospho-alpha-D-ribose 1-diphosphate: step 4/9. This chain is 1-(5-phosphoribosyl)-5-[(5-phosphoribosylamino)methylideneamino] imidazole-4-carboxamide isomerase, found in Bifidobacterium longum subsp. infantis (strain ATCC 15697 / DSM 20088 / JCM 1222 / NCTC 11817 / S12).